The chain runs to 696 residues: Catalase (696 aa).

Catalysis depends on residues H64 and N137. The interval 187–211 is disordered; it reads SLAQGSQISSERGSPKAYSNTEPNK. Residues 189–208 show a composition bias toward polar residues; that stretch reads AQGSQISSERGSPKAYSNTE. Heme is bound at residue Y353.

Belongs to the catalase family. Heme is required as a cofactor.

It carries out the reaction 2 H2O2 = O2 + 2 H2O. Its function is as follows. Occurs in almost all aerobically respiring organisms and serves to protect cells from the toxic effects of hydrogen peroxide. In Penicillium janthinellum (Penicillium vitale), this protein is Catalase.